The sequence spans 280 residues: Succinate dehydrogenase [ubiquinone] iron-sulfur subunit 2, mitochondrial (280 aa).

The transit peptide at 1–28 directs the protein to the mitochondrion; that stretch reads MAFGLIGRVVGTKSSRLSTAARLIPARW. Positions 51 to 140 constitute a 2Fe-2S ferredoxin-type domain; the sequence is FQIYRWNPDN…ETTITPLPHM (90 aa). C101, C106, and C121 together coordinate [2Fe-2S] cluster. One can recognise a 4Fe-4S ferredoxin-type domain in the interval 183–213; sequence DRAKLDGMYECILCACCSTSCPSYWWNPESY. Positions 193, 196, and 199 each coordinate [4Fe-4S] cluster. C203 serves as a coordination point for [3Fe-4S] cluster. W208 serves as a coordination point for a ubiquinone. Residues C250 and C256 each coordinate [3Fe-4S] cluster. C260 is a [4Fe-4S] cluster binding site.

It belongs to the succinate dehydrogenase/fumarate reductase iron-sulfur protein family. As to quaternary structure, component of complex II composed of eight subunits in plants: four classical SDH subunits SDH1, SDH2, SDH3 and SDH4 (a flavoprotein (FP), an iron-sulfur protein (IP), and a cytochrome b composed of a large and a small subunit.), as well as four subunits unknown in mitochondria from bacteria and heterotrophic eukaryotes. It depends on [2Fe-2S] cluster as a cofactor. The cofactor is [3Fe-4S] cluster. [4Fe-4S] cluster serves as cofactor. In terms of tissue distribution, ubiquitous. Preferentially expressed in flowers, inflorescences and root tips.

It localises to the mitochondrion inner membrane. It carries out the reaction a quinone + succinate = fumarate + a quinol. It functions in the pathway carbohydrate metabolism; tricarboxylic acid cycle; fumarate from succinate (eukaryal route): step 1/1. In terms of biological role, iron-sulfur protein (IP) subunit of succinate dehydrogenase (SDH) that is involved in complex II of the mitochondrial electron transport chain and is responsible for transferring electrons from succinate to ubiquinone (coenzyme Q). The polypeptide is Succinate dehydrogenase [ubiquinone] iron-sulfur subunit 2, mitochondrial (SDH2-2) (Arabidopsis thaliana (Mouse-ear cress)).